Reading from the N-terminus, the 420-residue chain is ATP phosphoribosyltransferase regulatory subunit (420 aa).

Belongs to the class-II aminoacyl-tRNA synthetase family. HisZ subfamily. In terms of assembly, heteromultimer composed of HisG and HisZ subunits.

It localises to the cytoplasm. The protein operates within amino-acid biosynthesis; L-histidine biosynthesis; L-histidine from 5-phospho-alpha-D-ribose 1-diphosphate: step 1/9. In terms of biological role, required for the first step of histidine biosynthesis. May allow the feedback regulation of ATP phosphoribosyltransferase activity by histidine. In Bacillus cereus (strain ATCC 14579 / DSM 31 / CCUG 7414 / JCM 2152 / NBRC 15305 / NCIMB 9373 / NCTC 2599 / NRRL B-3711), this protein is ATP phosphoribosyltransferase regulatory subunit.